We begin with the raw amino-acid sequence, 61 residues long: Acetylcholinesterase toxin C (61 aa).

Intrachain disulfides connect Cys3–Cys22, Cys17–Cys39, Cys41–Cys52, and Cys53–Cys59.

Belongs to the three-finger toxin family. Short-chain subfamily. Acn-esterase inhibitor sub-subfamily. In terms of tissue distribution, expressed by the venom gland.

The protein resides in the secreted. In terms of biological role, inhibits acetylcholinesterase. This Dendroaspis polylepis polylepis (Black mamba) protein is Acetylcholinesterase toxin C.